Consider the following 69-residue polypeptide: Large ribosomal subunit protein uL29 (69 aa).

Belongs to the universal ribosomal protein uL29 family.

This is Large ribosomal subunit protein uL29 from Thermoanaerobacter pseudethanolicus (strain ATCC 33223 / 39E) (Clostridium thermohydrosulfuricum).